Consider the following 377-residue polypeptide: Bifunctional enzyme IspD/IspF (377 aa).

The tract at residues 1 to 221 (MTTAAIIVAA…ERILRQDMDV (221 aa)) is 2-C-methyl-D-erythritol 4-phosphate cytidylyltransferase. The segment at 222–377 (RLGNGYDVHR…ALATACLVKP (156 aa)) is 2-C-methyl-D-erythritol 2,4-cyclodiphosphate synthase. A divalent metal cation contacts are provided by aspartate 228 and histidine 230. Residues 228-230 (DVH) and 254-255 (HS) each bind 4-CDP-2-C-methyl-D-erythritol 2-phosphate. Residue histidine 262 participates in a divalent metal cation binding. 4-CDP-2-C-methyl-D-erythritol 2-phosphate is bound by residues 276-278 (DIG), 352-355 (TTSE), phenylalanine 359, and arginine 362.

In the N-terminal section; belongs to the IspD/TarI cytidylyltransferase family. IspD subfamily. The protein in the C-terminal section; belongs to the IspF family. A divalent metal cation serves as cofactor.

It catalyses the reaction 2-C-methyl-D-erythritol 4-phosphate + CTP + H(+) = 4-CDP-2-C-methyl-D-erythritol + diphosphate. It carries out the reaction 4-CDP-2-C-methyl-D-erythritol 2-phosphate = 2-C-methyl-D-erythritol 2,4-cyclic diphosphate + CMP. It participates in isoprenoid biosynthesis; isopentenyl diphosphate biosynthesis via DXP pathway; isopentenyl diphosphate from 1-deoxy-D-xylulose 5-phosphate: step 2/6. Its pathway is isoprenoid biosynthesis; isopentenyl diphosphate biosynthesis via DXP pathway; isopentenyl diphosphate from 1-deoxy-D-xylulose 5-phosphate: step 4/6. Bifunctional enzyme that catalyzes the formation of 4-diphosphocytidyl-2-C-methyl-D-erythritol from CTP and 2-C-methyl-D-erythritol 4-phosphate (MEP) (IspD), and catalyzes the conversion of 4-diphosphocytidyl-2-C-methyl-D-erythritol 2-phosphate (CDP-ME2P) to 2-C-methyl-D-erythritol 2,4-cyclodiphosphate (ME-CPP) with a corresponding release of cytidine 5-monophosphate (CMP) (IspF). This chain is Bifunctional enzyme IspD/IspF, found in Ruegeria pomeroyi (strain ATCC 700808 / DSM 15171 / DSS-3) (Silicibacter pomeroyi).